Here is a 665-residue protein sequence, read N- to C-terminus: Auxin response factor 1 (665 aa).

A DNA-binding region (TF-B3) is located at residues 124–226; that stretch reads FCKTLTASDT…ELRVGVRRHM (103 aa). Disordered regions lie at residues 356–408, 496–542, and 645–665; these read VANS…SVPL, PVPS…RQIR, and KADA…AGSR. 3 stretches are compositionally biased toward polar residues: residues 497–519, 530–542, and 651–665; these read VPSN…SDIP, LRSP…RQIR, and NGNT…AGSR. The PB1 domain maps to 542–635; that stretch reads RSCTKVHMQG…EVKKLSPKNK (94 aa).

This sequence belongs to the ARF family. As to quaternary structure, homodimers and heterodimers. Interacts with the auxin-responsive proteins IAA12, IAA13, IAA17 and with ARF2. Binds to RIN13 in the nucleus. Expressed in the whole plant.

It is found in the nucleus. The protein resides in the cytoplasm. Functionally, auxin response factors (ARFs) are transcriptional factors that bind specifically to the DNA sequence 5'-TGTCTC-3' found in the auxin-responsive promoter elements (AuxREs). Seems to act as transcriptional repressor. Formation of heterodimers with Aux/IAA proteins may alter their ability to modulate early auxin response genes expression. Promotes flowering, stamen development, floral organ abscission and fruit dehiscence. Acts as a repressor of IAA2, IAA3 and IAA7. Together with RIN13, promotes leaf senescence and cell death. The sequence is that of Auxin response factor 1 from Arabidopsis thaliana (Mouse-ear cress).